The following is a 177-amino-acid chain: NADH-quinone oxidoreductase subunit B (177 aa).

[4Fe-4S] cluster contacts are provided by Cys56, Cys57, Cys121, and Cys151.

It belongs to the complex I 20 kDa subunit family. As to quaternary structure, NDH-1 is composed of 14 different subunits. Subunits NuoB, C, D, E, F, and G constitute the peripheral sector of the complex. Requires [4Fe-4S] cluster as cofactor.

The protein resides in the cell inner membrane. The catalysed reaction is a quinone + NADH + 5 H(+)(in) = a quinol + NAD(+) + 4 H(+)(out). Its function is as follows. NDH-1 shuttles electrons from NADH, via FMN and iron-sulfur (Fe-S) centers, to quinones in the respiratory chain. The immediate electron acceptor for the enzyme in this species is believed to be ubiquinone. Couples the redox reaction to proton translocation (for every two electrons transferred, four hydrogen ions are translocated across the cytoplasmic membrane), and thus conserves the redox energy in a proton gradient. The chain is NADH-quinone oxidoreductase subunit B from Rhodobacter capsulatus (Rhodopseudomonas capsulata).